The following is a 321-amino-acid chain: L-carnitine dehydrogenase (321 aa).

14–19 contributes to the NAD(+) binding site; it reads GAGVIG.

Belongs to the 3-hydroxyacyl-CoA dehydrogenase family. L-carnitine dehydrogenase subfamily. Homodimer.

The protein resides in the cytoplasm. The enzyme catalyses carnitine + NAD(+) = 3-dehydrocarnitine + NADH + H(+). Its pathway is amine and polyamine metabolism; carnitine metabolism. Catalyzes the NAD(+)-dependent oxidation of L-carnitine to 3-dehydrocarnitine. This is L-carnitine dehydrogenase from Burkholderia mallei (strain ATCC 23344).